We begin with the raw amino-acid sequence, 427 residues long: Isocitrate dehydrogenase [NADP] (427 aa).

T114 provides a ligand contact to NADP(+). The D-threo-isocitrate site is built by S123, N125, R129, R139, and R163. D317 contacts Mg(2+). Residues 349 to 355, N362, Y401, and R405 contribute to the NADP(+) site; that span reads HGTAPKY.

The protein belongs to the isocitrate and isopropylmalate dehydrogenases family. In terms of assembly, homodimer. Requires Mg(2+) as cofactor. It depends on Mn(2+) as a cofactor.

The enzyme catalyses D-threo-isocitrate + NADP(+) = 2-oxoglutarate + CO2 + NADPH. Functionally, catalyzes the oxidative decarboxylation of isocitrate to 2-oxoglutarate and carbon dioxide with the concomitant reduction of NADP(+). The protein is Isocitrate dehydrogenase [NADP] (icd) of Coxiella burnetii (strain RSA 493 / Nine Mile phase I).